Consider the following 74-residue polypeptide: Brevinin-2CG1 (74 aa).

Residues methionine 1–cysteine 22 form the signal peptide. A propeptide spans glutamate 23–valine 39 (removed in mature form). Cysteine 68 and cysteine 74 are oxidised to a cystine.

As to expression, expressed by the skin glands.

It localises to the secreted. Functionally, antimicrobial peptide active against a variety of Gram-positive and some Gram-negative bacterial strains. Has antifungal activity against a slime mold isolate. Has hemolytic activity against human erythrocytes. The protein is Brevinin-2CG1 of Amolops chunganensis (Chungan torrent frog).